A 360-amino-acid chain; its full sequence is Phospho-N-acetylmuramoyl-pentapeptide-transferase (360 aa).

The next 10 membrane-spanning stretches (helical) occupy residues arginine 24–isoleucine 44, glycine 69–tryptophan 89, tryptophan 92–phenylalanine 112, methionine 133–asparagine 153, isoleucine 158–valine 178, glycine 199–serine 219, valine 239–tyrosine 259, valine 263–isoleucine 283, phenylalanine 288–valine 308, and glutamine 337–leucine 357.

The protein belongs to the glycosyltransferase 4 family. MraY subfamily. Requires Mg(2+) as cofactor.

It is found in the cell inner membrane. It catalyses the reaction UDP-N-acetyl-alpha-D-muramoyl-L-alanyl-gamma-D-glutamyl-meso-2,6-diaminopimeloyl-D-alanyl-D-alanine + di-trans,octa-cis-undecaprenyl phosphate = di-trans,octa-cis-undecaprenyl diphospho-N-acetyl-alpha-D-muramoyl-L-alanyl-D-glutamyl-meso-2,6-diaminopimeloyl-D-alanyl-D-alanine + UMP. It participates in cell wall biogenesis; peptidoglycan biosynthesis. Functionally, catalyzes the initial step of the lipid cycle reactions in the biosynthesis of the cell wall peptidoglycan: transfers peptidoglycan precursor phospho-MurNAc-pentapeptide from UDP-MurNAc-pentapeptide onto the lipid carrier undecaprenyl phosphate, yielding undecaprenyl-pyrophosphoryl-MurNAc-pentapeptide, known as lipid I. This chain is Phospho-N-acetylmuramoyl-pentapeptide-transferase, found in Neisseria meningitidis serogroup C (strain 053442).